Consider the following 483-residue polypeptide: Pentatricopeptide repeat-containing protein At5g18950 (483 aa).

PPR repeat units follow at residues 144–178 (EPTL…GISS), 179–213 (SVVT…EFDS), 218–246 (CLIR…GLDP), 247–281 (GQYV…NHFP), 282–316 (SMYI…GYAP), 317–351 (DRVV…GMRP), 352–386 (NEFA…GYGG), 387–421 (TMLS…GVTP), and 422–456 (NAIT…GLKP).

This sequence belongs to the PPR family. P subfamily.

The polypeptide is Pentatricopeptide repeat-containing protein At5g18950 (Arabidopsis thaliana (Mouse-ear cress)).